The chain runs to 63 residues: Large ribosomal subunit protein bL35 (63 aa).

This sequence belongs to the bacterial ribosomal protein bL35 family.

This is Large ribosomal subunit protein bL35 from Campylobacter jejuni subsp. jejuni serotype O:2 (strain ATCC 700819 / NCTC 11168).